The sequence spans 512 residues: Replication initiation protein (512 aa).

Its function is as follows. Essential for replication. Binds specifically to a 60-bp region corresponding to the putative origin of replication of pXO2. Also binds nonspecifically to single-stranded DNA with lower affinity. In Bacillus anthracis, this protein is Replication initiation protein (repS).